The sequence spans 158 residues: NAD(P)H-quinone oxidoreductase subunit J, chloroplastic (158 aa).

The protein belongs to the complex I 30 kDa subunit family. In terms of assembly, NDH is composed of at least 16 different subunits, 5 of which are encoded in the nucleus.

The protein localises to the plastid. Its subcellular location is the chloroplast thylakoid membrane. It catalyses the reaction a plastoquinone + NADH + (n+1) H(+)(in) = a plastoquinol + NAD(+) + n H(+)(out). The enzyme catalyses a plastoquinone + NADPH + (n+1) H(+)(in) = a plastoquinol + NADP(+) + n H(+)(out). Functionally, NDH shuttles electrons from NAD(P)H:plastoquinone, via FMN and iron-sulfur (Fe-S) centers, to quinones in the photosynthetic chain and possibly in a chloroplast respiratory chain. The immediate electron acceptor for the enzyme in this species is believed to be plastoquinone. Couples the redox reaction to proton translocation, and thus conserves the redox energy in a proton gradient. The protein is NAD(P)H-quinone oxidoreductase subunit J, chloroplastic of Nicotiana tabacum (Common tobacco).